Reading from the N-terminus, the 267-residue chain is 4-hydroxy-tetrahydrodipicolinate reductase (267 aa).

8–13 (GAAGRM) contributes to the NAD(+) binding site. Position 35 (Arg-35) interacts with NADP(+). NAD(+)-binding positions include 98-100 (GTT) and 122-125 (AANF). The Proton donor/acceptor role is filled by His-155. His-156 provides a ligand contact to (S)-2,3,4,5-tetrahydrodipicolinate. Catalysis depends on Lys-159, which acts as the Proton donor. Position 165 to 166 (165 to 166 (GT)) interacts with (S)-2,3,4,5-tetrahydrodipicolinate.

Belongs to the DapB family.

The protein localises to the cytoplasm. It carries out the reaction (S)-2,3,4,5-tetrahydrodipicolinate + NAD(+) + H2O = (2S,4S)-4-hydroxy-2,3,4,5-tetrahydrodipicolinate + NADH + H(+). It catalyses the reaction (S)-2,3,4,5-tetrahydrodipicolinate + NADP(+) + H2O = (2S,4S)-4-hydroxy-2,3,4,5-tetrahydrodipicolinate + NADPH + H(+). Its pathway is amino-acid biosynthesis; L-lysine biosynthesis via DAP pathway; (S)-tetrahydrodipicolinate from L-aspartate: step 4/4. In terms of biological role, catalyzes the conversion of 4-hydroxy-tetrahydrodipicolinate (HTPA) to tetrahydrodipicolinate. This Azotobacter vinelandii (strain DJ / ATCC BAA-1303) protein is 4-hydroxy-tetrahydrodipicolinate reductase.